A 172-amino-acid polypeptide reads, in one-letter code: C-phycocyanin beta chain (172 aa).

(2R,3E)-phycocyanobilin-binding positions include Asn35, Asp39, Asn72, Arg77, Cys82, 82-88 (CLRDMEI), 149-151 (TIG), and Cys153. N4-methylasparagine is present on Asn72.

It belongs to the phycobiliprotein family. Heterodimer of an alpha and a beta subunit, which further assembles into trimers and the trimers into hexamers. The basic functional unit of phycobiliproteins is a ring-shaped hexamer formed from two back-to-back trimers contacting via the alpha chain subunits. The trimers are composed of alpha/beta subunit heterodimers arranged around a three-fold axis of symmetry. The phycoerythrins also contain a gamma subunit which is located in the center of the hexamer. Contains two covalently linked phycocyanobilin chromophores.

It is found in the plastid. It localises to the chloroplast thylakoid membrane. Its function is as follows. Light-harvesting photosynthetic tetrapyrrole chromophore-protein from the phycobiliprotein complex (phycobilisome, PBS). Phycocyanin is the major phycobiliprotein in the PBS rod. The chain is C-phycocyanin beta chain (cpcB) from Cyanidium caldarium (Red alga).